Consider the following 201-residue polypeptide: Holliday junction branch migration complex subunit RuvA (201 aa).

A domain I region spans residues Met-1–Thr-64. Residues Thr-65–Glu-143 are domain II. The interval Leu-144 to Ser-152 is flexible linker. Positions Asp-153–Arg-201 are domain III.

The protein belongs to the RuvA family. In terms of assembly, homotetramer. Forms an RuvA(8)-RuvB(12)-Holliday junction (HJ) complex. HJ DNA is sandwiched between 2 RuvA tetramers; dsDNA enters through RuvA and exits via RuvB. An RuvB hexamer assembles on each DNA strand where it exits the tetramer. Each RuvB hexamer is contacted by two RuvA subunits (via domain III) on 2 adjacent RuvB subunits; this complex drives branch migration. In the full resolvosome a probable DNA-RuvA(4)-RuvB(12)-RuvC(2) complex forms which resolves the HJ.

Its subcellular location is the cytoplasm. Its function is as follows. The RuvA-RuvB-RuvC complex processes Holliday junction (HJ) DNA during genetic recombination and DNA repair, while the RuvA-RuvB complex plays an important role in the rescue of blocked DNA replication forks via replication fork reversal (RFR). RuvA specifically binds to HJ cruciform DNA, conferring on it an open structure. The RuvB hexamer acts as an ATP-dependent pump, pulling dsDNA into and through the RuvAB complex. HJ branch migration allows RuvC to scan DNA until it finds its consensus sequence, where it cleaves and resolves the cruciform DNA. In Clostridium perfringens (strain ATCC 13124 / DSM 756 / JCM 1290 / NCIMB 6125 / NCTC 8237 / Type A), this protein is Holliday junction branch migration complex subunit RuvA.